Consider the following 131-residue polypeptide: Fluoride-specific ion channel FluC (131 aa).

4 helical membrane passes run 4 to 24 (LWIM…TGFV), 30 to 50 (GIFP…IGFF), 68 to 88 (LFVM…SLQT), and 104 to 124 (IALS…VAVA). 2 residues coordinate Na(+): glycine 76 and threonine 79.

The protein belongs to the fluoride channel Fluc/FEX (TC 1.A.43) family.

It localises to the cell inner membrane. The catalysed reaction is fluoride(in) = fluoride(out). Its activity is regulated as follows. Na(+) is not transported, but it plays an essential structural role and its presence is essential for fluoride channel function. In terms of biological role, fluoride-specific ion channel. Important for reducing fluoride concentration in the cell, thus reducing its toxicity. This is Fluoride-specific ion channel FluC from Methylocella silvestris (strain DSM 15510 / CIP 108128 / LMG 27833 / NCIMB 13906 / BL2).